A 323-amino-acid polypeptide reads, in one-letter code: MAPTHVLRCCQRGLAWIPVIFIALVVCWSYYAYVVELCLLVYLVVFHLSFVMFVWSYWKTIFTKPANPSKEFCLPKSEKEQYEKEQRPETQQEILKKVATSLPLYTRTGAGAIRYCDRCQVIKPDRCHHCSACDMCVLKMDHHCPWVNNCVGFSNYKFFILFLTYSLVYCLFIAASVLQYFIKFWTSDLPESHAKFHVLFLFFVAAMFCISILSLFTYHLWLVGKNRSTIEAFRAPVFRNGPDKNGFSLGFSKNIAQVFGDEKKYWLLPVFTSQGDGLSFPTRLVTIDPEQPTECLQPGGAISSLIIVEYCFCKQAKKKKTDE.

Residues 1–14 (MAPTHVLRCCQRGL) are Cytoplasmic-facing. Residues 15 to 35 (AWIPVIFIALVVCWSYYAYVV) form a helical membrane-spanning segment. Residues 36-41 (ELCLLV) lie on the Lumenal side of the membrane. A helical membrane pass occupies residues 42–62 (YLVVFHLSFVMFVWSYWKTIF). Residues 63 to 157 (TKPANPSKEF…NNCVGFSNYK (95 aa)) are Cytoplasmic-facing. Residues 114-164 (RYCDRCQVIKPDRCHHCSACDMCVLKMDHHCPWVNNCVGFSNYKFFILFLT) form the DHHC domain. The active-site S-palmitoyl cysteine intermediate is cysteine 144. A helical transmembrane segment spans residues 158-178 (FFILFLTYSLVYCLFIAASVL). The Lumenal portion of the chain corresponds to 179–195 (QYFIKFWTSDLPESHAK). Residues 196–219 (FHVLFLFFVAAMFCISILSLFTYH) form a helical membrane-spanning segment. Over 220-323 (LWLVGKNRST…KQAKKKKTDE (104 aa)) the chain is Cytoplasmic.

The protein belongs to the DHHC palmitoyltransferase family.

Its subcellular location is the golgi apparatus membrane. It is found in the cell membrane. The protein localises to the cytoplasm. It localises to the perinuclear region. The protein resides in the endoplasmic reticulum membrane. Its subcellular location is the endoplasmic reticulum-Golgi intermediate compartment membrane. It carries out the reaction L-cysteinyl-[protein] + hexadecanoyl-CoA = S-hexadecanoyl-L-cysteinyl-[protein] + CoA. It catalyses the reaction L-cysteinyl-[protein] + tetradecanoyl-CoA = S-tetradecanoyl-L-cysteinyl-[protein] + CoA. The catalysed reaction is L-cysteinyl-[protein] + octadecanoyl-CoA = S-octadecanoyl-L-cysteinyl-[protein] + CoA. Its function is as follows. Palmitoyltransferase that could catalyze the addition of palmitate onto various protein substrates. Catalyzes palmitoylation of Cys residues on protein substrates and has a preference for acyl-CoA with C16 fatty acid chains but may also utilize acyl-CoA with C14 and C18 fatty acid chains. The protein is Palmitoyltransferase ZDHHC20-B (zdhhc20b) of Danio rerio (Zebrafish).